The primary structure comprises 151 residues: Mini-ribonuclease 3 (151 aa).

The active site involves Asp28.

The protein belongs to the MrnC RNase family. As to quaternary structure, homodimer. The cofactor is Mg(2+).

Its subcellular location is the cytoplasm. Its function is as follows. Involved in correct processing of both the 5' and 3' ends of 23S rRNA precursor. Processes 30S rRNA precursor transcript even in absence of ribonuclease 3 (Rnc); Rnc processes 30S rRNA into smaller rRNA precursors. This is Mini-ribonuclease 3 from Clostridium tetani (strain Massachusetts / E88).